The chain runs to 684 residues: MSNPKRKILVTCALPYANGAIHLGHMLEHIQADIWVRFQRMRGNEIHFVCADDAHGTPIMLNADKLGITPEQLIEKAKADHIADFAGFNISFDNYHSTHSEENREYTSAIYKKLKANGFIKSKVISQLFDPEKNMFLPDRFVKGTCPKCKAEDQYGDNCEVCASTYSPMDLINPRSVVSGSTPVVKQSEHFFFDLPSFEEMLKAWTRSGSLQPEIANKVQEWFESGLQQWDISRDAPYFGFEIPDSENKFFYVWLDAPIGYMASFKNLCDRTGLNFDDFWKKESDAELYHFIGKDIVYFHSLFWPAMLEGSEYRKPTNVFAHGYVTVDGQKMSKSRGTFIQASTYLKHIDPECLRYYYAAKLNDRIEDLDFNLEDFVQRVNSDIVNKLVNLASRTAGFITKRFEGKLASTLENQALFDEFVAQSEQIATYFETREYNKAIREIMALTDKANKYIDDKAPWVIAKEEGTDAELQAVCSMGLELFRVLMSYLKPVLPKLAERAEAFLQTELRWDNIGSPLFAHSIAPFKSLFSRLEKKQIDAVIEETKALFAESVKAETAKKGKEMTACETKVEPIAPEITIDDFAKLDLRVAKVLKCEAVPKSDKLLRFELDLGDHTRQVFSGIKAAYSQPEELEGRFVIMIANLAPRKMSFGMSEGMILSAGTGGADLYLLSADSGVTAGMQVR.

Residues Pro-15–His-25 carry the 'HIGH' region motif. The Zn(2+) site is built by Cys-146, Cys-149, Cys-159, and Cys-162. The 'KMSKS' region signature appears at Lys-331–Ser-335. Position 334 (Lys-334) interacts with ATP. The tRNA-binding domain maps to Asp-582–Arg-684.

Belongs to the class-I aminoacyl-tRNA synthetase family. MetG type 1 subfamily. As to quaternary structure, homodimer. It depends on Zn(2+) as a cofactor.

It is found in the cytoplasm. It catalyses the reaction tRNA(Met) + L-methionine + ATP = L-methionyl-tRNA(Met) + AMP + diphosphate. Is required not only for elongation of protein synthesis but also for the initiation of all mRNA translation through initiator tRNA(fMet) aminoacylation. The chain is Methionine--tRNA ligase from Glaesserella parasuis serovar 5 (strain SH0165) (Haemophilus parasuis).